The chain runs to 164 residues: 2S seed storage protein 1 (164 aa).

The first 21 residues, 1–21 (MANKLFLVCAALALCFLLTNA), serve as a signal peptide directing secretion. 3 propeptides span residues 22 to 37 (SIYRTVVEFEEDDATN), 74 to 83 (EFDFEDDMEN), and 163 to 164 (FY).

Belongs to the 2S seed storage albumins family. The mature protein consists of a small and a large chain linked by disulfide bonds.

In terms of biological role, this is a 2S seed storage protein. In Arabidopsis thaliana (Mouse-ear cress), this protein is 2S seed storage protein 1 (AT2S1).